Consider the following 337-residue polypeptide: ATP-dependent 6-phosphofructokinase (337 aa).

Residue Gly-11 participates in ATP binding. Position 21–25 (21–25) interacts with ADP; that stretch reads RAVVR. ATP is bound by residues 72–73 and 102–105; these read RY and GDGS. Asp-103 contributes to the Mg(2+) binding site. Substrate is bound at residue 125-127; sequence TID. Asp-127 acts as the Proton acceptor in catalysis. An ADP-binding site is contributed by Arg-154. Residues Arg-162 and 169–171 each bind substrate; that span reads MGR. ADP-binding positions include 185 to 187, Arg-212, and 214 to 216; these read GAD and KNH. Substrate contacts are provided by residues Glu-223, Arg-245, and 251 to 254; that span reads HILR.

This sequence belongs to the phosphofructokinase type A (PFKA) family. ATP-dependent PFK group I subfamily. Prokaryotic clade 'B1' sub-subfamily. Homotetramer. Mg(2+) serves as cofactor.

The protein resides in the cytoplasm. The catalysed reaction is beta-D-fructose 6-phosphate + ATP = beta-D-fructose 1,6-bisphosphate + ADP + H(+). The protein operates within carbohydrate degradation; glycolysis; D-glyceraldehyde 3-phosphate and glycerone phosphate from D-glucose: step 3/4. With respect to regulation, allosterically activated by ADP and other diphosphonucleosides, and allosterically inhibited by phosphoenolpyruvate. Its function is as follows. Catalyzes the phosphorylation of D-fructose 6-phosphate to fructose 1,6-bisphosphate by ATP, the first committing step of glycolysis. This Streptococcus equi subsp. equi (strain 4047) protein is ATP-dependent 6-phosphofructokinase.